The primary structure comprises 490 residues: Cardiolipin synthase 1 (490 aa).

2 consecutive transmembrane segments (helical) span residues 9–29 and 42–62; these read ILTI…FVII and WAWL…YLFL. PLD phosphodiesterase domains follow at residues 225-252 and 403-430; these read MNNR…GDDY and QNGF…DFRS. Active-site residues include H230, K232, D237, H408, K410, and D415.

This sequence belongs to the phospholipase D family. Cardiolipin synthase subfamily.

It is found in the cell membrane. The enzyme catalyses 2 a 1,2-diacyl-sn-glycero-3-phospho-(1'-sn-glycerol) = a cardiolipin + glycerol. Catalyzes the reversible phosphatidyl group transfer from one phosphatidylglycerol molecule to another to form cardiolipin (CL) (diphosphatidylglycerol) and glycerol. The protein is Cardiolipin synthase 1 (cls1) of Staphylococcus epidermidis (strain ATCC 35984 / DSM 28319 / BCRC 17069 / CCUG 31568 / BM 3577 / RP62A).